The chain runs to 594 residues: Sodium-dependent glucose transporter 1 (594 aa).

11 helical membrane passes run 77–97 (WLVSLALCASFLGLGMAISVL), 115–137 (LSYIFVGRASGYIGGSLLGGILF), 144–161 (LLLGFALLTTAFGMSGTP), 166–186 (AWVLTVLMSSVGVSMGVLDTG), 205–225 (ALHFSFAAGAFASPIIAKLLF), 269–289 (IVIGAFVLLVSLLFFSLYFCI), 311–331 (TLIILLSMFFFFYVGSEVAYG), 349–371 (AAGLNSLFWGAFAAGRGLAIFFA), 393–413 (LLCLFSQNYPMLWACTALYGI), 439–459 (IFVVGAALGEMVLPALLGFLL), and 467–487 (LLMYLTLCTATFTSILFPVLY).

It belongs to the major facilitator superfamily.

Its subcellular location is the apical cell membrane. In terms of biological role, may function as a sodium-dependent glucose transporter. Potential channels for urea in the inner medulla of kidney. This is Sodium-dependent glucose transporter 1 (mfsd4b) from Danio rerio (Zebrafish).